Reading from the N-terminus, the 366-residue chain is Growth hormone secretagogue receptor type 1 (366 aa).

The Extracellular portion of the chain corresponds to 1–40 (MWNATPSEEPGSNLTRAELGWDAPPGNDSLADELLQLFPA). N-linked (GlcNAc...) asparagine glycans are attached at residues N13 and N27. The chain crosses the membrane as a helical span at residues 41 to 66 (PLLAGVTATCVALFVVGIAGNLLTML). Residues 67–72 (VVSRFR) lie on the Cytoplasmic side of the membrane. The chain crosses the membrane as a helical span at residues 73-96 (ELRTTTNLYLSSMAFSDLLIFLCM). The Extracellular portion of the chain corresponds to 97 to 117 (PLDLVRLWQYRPWNFGDLLCK). Cysteines 116 and 198 form a disulfide. A helical transmembrane segment spans residues 118 to 139 (LFQFVSESCTYATVLTITALSV). The Cytoplasmic segment spans residues 140–162 (ERYFAICFPLRAKVVVTKGRVKL). A helical membrane pass occupies residues 163 to 183 (VILVIWALAFCSAGPIFVLVG). The Extracellular portion of the chain corresponds to 184–211 (VEHENGTDPQDTNECRATEFAVRSGLLT). N188 carries N-linked (GlcNAc...) asparagine glycosylation. Residues 212–235 (IMVWVSSVFFFLPVFCLTVLYSLI) form a helical membrane-spanning segment. Over 236–263 (GRKLWRRKRGDGAVGSSLRDQNHRQTVK) the chain is Cytoplasmic. Residues 264-285 (MLAVVVFAFILCWLPFHVGRYL) form a helical membrane-spanning segment. The Extracellular portion of the chain corresponds to 286 to 302 (FSKSFEPGSLEIAQISQ). Residues 303–326 (YCNLVSFVLFYLSAAINPILYNIM) traverse the membrane as a helical segment. The Cytoplasmic segment spans residues 327–366 (SKKYRVAVFKLLGFEPFSQRKLSTLKDESSRAWTKSSINT).

This sequence belongs to the G-protein coupled receptor 1 family.

It is found in the cell membrane. In terms of biological role, receptor for ghrelin, coupled to G-alpha-11 proteins. Stimulates growth hormone secretion. Also binds other growth hormone releasing peptides (GHRP) (e.g. Met-enkephalin and GHRP-6) as well as non-peptide, low molecular weight secretagogues (e.g. L-692,429, MK-0677, adenosine). The chain is Growth hormone secretagogue receptor type 1 (GHSR) from Oryctolagus cuniculus (Rabbit).